Reading from the N-terminus, the 24-residue chain is Glutamate dehydrogenase (24 aa).

It belongs to the Glu/Leu/Phe/Val dehydrogenases family. Homohexamer.

The protein resides in the cytoplasm. The enzyme catalyses L-glutamate + NAD(+) + H2O = 2-oxoglutarate + NH4(+) + NADH + H(+). It catalyses the reaction L-glutamate + NADP(+) + H2O = 2-oxoglutarate + NH4(+) + NADPH + H(+). The protein is Glutamate dehydrogenase (gdhA) of Pyrococcus woesei.